The chain runs to 171 residues: MKEPIEFKLSGDRAFSEREKAINQLYNRRYFGEVVNGKLFLSLIEAAYLMERGKIKVLDGGKELSFEELFELGRKKDDQFDIKYLVYKDLRDRGYIVKSALKFGSHFRVYRRGMDEHSQWLIWVVPENLRFSANDITARVRVAHGVRKNMVMAVVDEDNDVVYYKIEWVKF.

Residues Y110, H117, and K148 contribute to the active site.

The protein belongs to the tRNA-intron endonuclease family. Archaeal short subfamily. Homotetramer; although the tetramer contains four active sites, only two participate in the cleavage. Therefore, it should be considered as a dimer of dimers.

The catalysed reaction is pretRNA = a 3'-half-tRNA molecule with a 5'-OH end + a 5'-half-tRNA molecule with a 2',3'-cyclic phosphate end + an intron with a 2',3'-cyclic phosphate and a 5'-hydroxyl terminus.. Functionally, endonuclease that removes tRNA introns. Cleaves pre-tRNA at the 5'- and 3'-splice sites to release the intron. The products are an intron and two tRNA half-molecules bearing 2',3' cyclic phosphate and 5'-OH termini. Recognizes a pseudosymmetric substrate in which 2 bulged loops of 3 bases are separated by a stem of 4 bp. In Thermococcus onnurineus (strain NA1), this protein is tRNA-splicing endonuclease.